The primary structure comprises 233 residues: Clathrin light chain (233 aa).

A disordered region spans residues 1-124; that stretch reads MSEKFPPLED…EDRSEVVDQW (124 aa). A compositionally biased stretch (basic and acidic residues) spans 17 to 43; that stretch reads PNDKKDDDTDFLKREAEILGDEFKTEQ. At T49 the chain carries Phosphothreonine. S52 is modified (phosphoserine). A compositionally biased stretch (acidic residues) spans 56–67; the sequence is DDDEIRDFEEQF. Residues 69 to 92 are compositionally biased toward polar residues; it reads DINSANGAVSSDQNGSATVSSGND. The span at 112–124 shows a compositional bias: basic and acidic residues; sequence SVKEDRSEVVDQW. A coiled-coil region spans residues 125-186; the sequence is KQRRAVEIHE…EAFLKKRDEF (62 aa). The segment at 144-204 is involved in binding clathrin heavy chain; sequence KELQDEAIKH…DRALQLINQD (61 aa).

This sequence belongs to the clathrin light chain family. As to quaternary structure, clathrin coats are formed from molecules containing 3 heavy chains and 3 light chains. Interacts with the auxilin-like clathrin uncoating factor SWA2.

It localises to the cytoplasmic vesicle membrane. It is found in the membrane. The protein resides in the coated pit. In terms of biological role, clathrin is the major protein of the polyhedral coat of coated pits and vesicles. In yeast, it is involved in the retention of proteins in an intracellular membrane compartment, presumably the trans-Golgi. The yeast light chain is important for cell growth. The light chain may help to properly orient the assembly/ disassembly of the clathrin coats. This chain is Clathrin light chain (CLC1), found in Saccharomyces cerevisiae (strain ATCC 204508 / S288c) (Baker's yeast).